The following is a 364-amino-acid chain: tRNA 2-selenouridine synthase (364 aa).

Residues 14 to 137 (LIADTPIIDV…LRQTAIQATI (124 aa)) enclose the Rhodanese domain. Cys-97 functions as the S-selanylcysteine intermediate in the catalytic mechanism.

The protein belongs to the SelU family. Monomer.

It catalyses the reaction 5-methylaminomethyl-2-thiouridine(34) in tRNA + selenophosphate + (2E)-geranyl diphosphate + H2O + H(+) = 5-methylaminomethyl-2-selenouridine(34) in tRNA + (2E)-thiogeraniol + phosphate + diphosphate. It carries out the reaction 5-methylaminomethyl-2-thiouridine(34) in tRNA + (2E)-geranyl diphosphate = 5-methylaminomethyl-S-(2E)-geranyl-thiouridine(34) in tRNA + diphosphate. The catalysed reaction is 5-methylaminomethyl-S-(2E)-geranyl-thiouridine(34) in tRNA + selenophosphate + H(+) = 5-methylaminomethyl-2-(Se-phospho)selenouridine(34) in tRNA + (2E)-thiogeraniol. The enzyme catalyses 5-methylaminomethyl-2-(Se-phospho)selenouridine(34) in tRNA + H2O = 5-methylaminomethyl-2-selenouridine(34) in tRNA + phosphate. Functionally, involved in the post-transcriptional modification of the uridine at the wobble position (U34) of tRNA(Lys), tRNA(Glu) and tRNA(Gln). Catalyzes the conversion of 2-thiouridine (S2U-RNA) to 2-selenouridine (Se2U-RNA). Acts in a two-step process involving geranylation of 2-thiouridine (S2U) to S-geranyl-2-thiouridine (geS2U) and subsequent selenation of the latter derivative to 2-selenouridine (Se2U) in the tRNA chain. In Escherichia coli O6:K15:H31 (strain 536 / UPEC), this protein is tRNA 2-selenouridine synthase.